Consider the following 360-residue polypeptide: Phospho-N-acetylmuramoyl-pentapeptide-transferase (360 aa).

Topologically, residues 1-25 (MLVWLAEHLVKYYSGFNVFSYLTFR) are periplasmic. The helical transmembrane segment at 26–46 (AIVSLLTALFISLWMGPRMIA) threads the bilayer. Residues 47-71 (HLQKLSFGQVVRNDGPESHFSKRGT) are Cytoplasmic-facing. A helical transmembrane segment spans residues 72-92 (PTMGGIMILTAIVISVLLWAY). Pro93 is a topological domain (periplasmic). A helical transmembrane segment spans residues 94–114 (SNPYVWCVLVVLVGYGVIGFV). The Cytoplasmic segment spans residues 115 to 131 (DDYRKVVRKDTKGLIAR). A helical membrane pass occupies residues 132 to 152 (WKYFWMSVIALGVAFALYLAG). The Periplasmic portion of the chain corresponds to 153–167 (KDTPATQLVVPFFKD). A helical transmembrane segment spans residues 168-188 (VMPQLGLFYILLAYFVIVGTG). The Cytoplasmic segment spans residues 189 to 198 (NAVNLTDGLD). The chain crosses the membrane as a helical span at residues 199–219 (GLAIMPTVFVAGGFALVAWAT). At 220 to 235 (GNMNFASYLHIPYLRH) the chain is on the periplasmic side. A helical membrane pass occupies residues 236-256 (AGELVIVCTAIVGAGLGFLWF). Over 257–262 (NTYPAQ) the chain is Cytoplasmic. The helical transmembrane segment at 263–283 (VFMGDVGSLALGGALGIIAVL) threads the bilayer. The Periplasmic portion of the chain corresponds to 284-287 (LRQE). The helical transmembrane segment at 288–308 (FLLVIMGGVFVVETLSVILQV) threads the bilayer. At 309-337 (GSFKLRGQRIFRMAPIHHHYELKGWPEPR) the chain is on the cytoplasmic side. Residues 338-358 (VIVRFWIISLMLVLIGLATLK) traverse the membrane as a helical segment. Residues 359-360 (VR) lie on the Periplasmic side of the membrane.

The protein belongs to the glycosyltransferase 4 family. MraY subfamily. It depends on Mg(2+) as a cofactor.

Its subcellular location is the cell inner membrane. It catalyses the reaction UDP-N-acetyl-alpha-D-muramoyl-L-alanyl-gamma-D-glutamyl-meso-2,6-diaminopimeloyl-D-alanyl-D-alanine + di-trans,octa-cis-undecaprenyl phosphate = di-trans,octa-cis-undecaprenyl diphospho-N-acetyl-alpha-D-muramoyl-L-alanyl-D-glutamyl-meso-2,6-diaminopimeloyl-D-alanyl-D-alanine + UMP. It participates in cell wall biogenesis; peptidoglycan biosynthesis. Catalyzes the initial step of the lipid cycle reactions in the biosynthesis of the cell wall peptidoglycan: transfers peptidoglycan precursor phospho-MurNAc-pentapeptide from UDP-MurNAc-pentapeptide onto the lipid carrier undecaprenyl phosphate, yielding undecaprenyl-pyrophosphoryl-MurNAc-pentapeptide, known as lipid I. The polypeptide is Phospho-N-acetylmuramoyl-pentapeptide-transferase (Shigella boydii serotype 18 (strain CDC 3083-94 / BS512)).